We begin with the raw amino-acid sequence, 3649 residues long: N-(5-amino-5-carboxypentanoyl)-L-cysteinyl-D-valine synthase (3649 aa).

Positions 401-861 (SRDRAYVTYT…LAGHLESQGH (461 aa)) are domain 1 (adipate-activating). Carrier domains lie at 783–860 (APLL…ESQG), 1859–1936 (APVS…QAAA), and 2909–2984 (APRD…LSGL). Residues Ser-820, Ser-1896, and Ser-2944 each carry the O-(pantetheine 4'-phosphoryl)serine modification. Residues 1014–1937 (HHIILDGWSL…QAEHIQAAAL (924 aa)) form a domain 2 (cysteine-activating) region. The tract at residues 2079-2985 (HHSCFDGWSW…FVDNVLSGLA (907 aa)) is domain 3 (valine-activating). Ser-3502 acts as the For thioesterase activity in catalysis.

The protein belongs to the ATP-dependent AMP-binding enzyme family. The cofactor is pantetheine 4'-phosphate.

It catalyses the reaction L-2-aminoadipate + L-valine + L-cysteine + 3 ATP + H2O = N-[(5S)-5-amino-5-carboxypentanoyl]-L-cysteinyl-D-valine + 3 AMP + 3 diphosphate + 3 H(+). Its pathway is antibiotic biosynthesis; penicillin G biosynthesis; penicillin G from L-alpha-aminoadipate and L-cysteine and L-valine: step 1/3. In terms of biological role, each of the constituent amino acids of the tripeptide acv are activated as aminoacyl-adenylates with peptide bonds formed through the participation of amino acid thioester intermediates. This Amycolatopsis lactamdurans (Nocardia lactamdurans) protein is N-(5-amino-5-carboxypentanoyl)-L-cysteinyl-D-valine synthase (pcbAB).